Consider the following 197-residue polypeptide: Large ribosomal subunit protein bL25 (197 aa).

Belongs to the bacterial ribosomal protein bL25 family. CTC subfamily. In terms of assembly, part of the 50S ribosomal subunit; part of the 5S rRNA/L5/L18/L25 subcomplex. Contacts the 5S rRNA. Binds to the 5S rRNA independently of L5 and L18.

Functionally, this is one of the proteins that binds to the 5S RNA in the ribosome where it forms part of the central protuberance. The protein is Large ribosomal subunit protein bL25 of Caulobacter vibrioides (strain ATCC 19089 / CIP 103742 / CB 15) (Caulobacter crescentus).